Here is a 257-residue protein sequence, read N- to C-terminus: Anamorsin homolog (257 aa).

The segment at 1–134 (MSDRKNVLFV…KVGSSDKVTL (134 aa)) is N-terminal SAM-like domain. The linker stretch occupies residues 135 to 168 (NPEMKENVVSAWKLDDNNSETISEDDLLEADDLI). [2Fe-2S] cluster contacts are provided by C178, C187, C190, and C192. The tract at residues 178 to 192 (CATTKKAKACKDCSC) is fe-S binding site A. 4 residues coordinate [4Fe-4S] cluster: C218, C221, C229, and C232. 2 consecutive short sequence motifs (cx2C motif) follow at residues 218–221 (CGSC) and 229–232 (CASC). Residues 218–232 (CGSCYLGDAFRCASC) are fe-S binding site B.

Belongs to the anamorsin family. As to quaternary structure, monomer. It depends on [2Fe-2S] cluster as a cofactor. [4Fe-4S] cluster serves as cofactor.

It is found in the cytoplasm. The protein localises to the mitochondrion intermembrane space. Functionally, component of the cytosolic iron-sulfur (Fe-S) protein assembly (CIA) machinery. Required for the maturation of extramitochondrial Fe-S proteins. Part of an electron transfer chain functioning in an early step of cytosolic Fe-S biogenesis, facilitating the de novo assembly of a [4Fe-4S] cluster on the cytosolic Fe-S scaffold complex. Electrons are transferred from NADPH via a FAD- and FMN-containing diflavin oxidoreductase. Together with the diflavin oxidoreductase, also required for the assembly of the diferric tyrosyl radical cofactor of ribonucleotide reductase (RNR), probably by providing electrons for reduction during radical cofactor maturation in the catalytic small subunit. The protein is Anamorsin homolog of Acyrthosiphon pisum (Pea aphid).